The sequence spans 549 residues: Cytoplasmic trehalase (549 aa).

Substrate is bound by residues Arg168, Trp175–Asp176, Asn212, Arg221–Gln223, Arg292–Glu294, and Gly324. Residues Asp326 and Glu509 each act as proton donor/acceptor in the active site. Glu525 contacts substrate.

It belongs to the glycosyl hydrolase 37 family. As to quaternary structure, monomer.

It localises to the cytoplasm. It catalyses the reaction alpha,alpha-trehalose + H2O = alpha-D-glucose + beta-D-glucose. Its pathway is glycan degradation; trehalose degradation; D-glucose from alpha,alpha-trehalose: step 1/1. Functionally, hydrolyzes trehalose to glucose. Could be involved, in cells returning to low osmolarity conditions, in the utilization of the accumulated cytoplasmic trehalose, which was synthesized in response to high osmolarity. The chain is Cytoplasmic trehalase from Shigella flexneri serotype 5b (strain 8401).